The following is a 174-amino-acid chain: Cytochrome c-type biogenesis protein CcmE (174 aa).

Over 1-8 (MNPRRKSR) the chain is Cytoplasmic. Residues 9 to 29 (LSVVLFILLGISVASALVLYA) traverse the membrane as a helical; Signal-anchor for type II membrane protein segment. Over 30-174 (LRQNIDLFYT…QEKQFKEGNQ (145 aa)) the chain is Periplasmic. Positions 131 and 135 each coordinate heme. Residues 149–174 (KPMGISDLKNESDRDRQEKQFKEGNQ) are disordered. A compositionally biased stretch (basic and acidic residues) spans 156–174 (LKNESDRDRQEKQFKEGNQ).

The protein belongs to the CcmE/CycJ family.

Its subcellular location is the cell inner membrane. Heme chaperone required for the biogenesis of c-type cytochromes. Transiently binds heme delivered by CcmC and transfers the heme to apo-cytochromes in a process facilitated by CcmF and CcmH. The protein is Cytochrome c-type biogenesis protein CcmE of Histophilus somni (strain 2336) (Haemophilus somnus).